The primary structure comprises 245 residues: tRNA (guanine-N(1)-)-methyltransferase (245 aa).

S-adenosyl-L-methionine-binding positions include Gly-111 and 131–136; that span reads MGDYVL.

It belongs to the RNA methyltransferase TrmD family. As to quaternary structure, homodimer.

It localises to the cytoplasm. The enzyme catalyses guanosine(37) in tRNA + S-adenosyl-L-methionine = N(1)-methylguanosine(37) in tRNA + S-adenosyl-L-homocysteine + H(+). Specifically methylates guanosine-37 in various tRNAs. The protein is tRNA (guanine-N(1)-)-methyltransferase of Staphylococcus aureus (strain MRSA252).